Consider the following 70-residue polypeptide: Small ribosomal subunit protein bS21B (70 aa).

It belongs to the bacterial ribosomal protein bS21 family.

The chain is Small ribosomal subunit protein bS21B (rpsU2) from Rhizobium meliloti (strain 1021) (Ensifer meliloti).